Reading from the N-terminus, the 313-residue chain is Ribose-phosphate pyrophosphokinase (313 aa).

ATP is bound by residues 37-39 (DGE) and 96-97 (RQ). Positions 131 and 170 each coordinate Mg(2+). The active site involves lysine 193. D-ribose 5-phosphate contacts are provided by residues arginine 195, aspartate 219, and 223–227 (DTAGT).

The protein belongs to the ribose-phosphate pyrophosphokinase family. Class I subfamily. As to quaternary structure, homohexamer. Requires Mg(2+) as cofactor.

Its subcellular location is the cytoplasm. The catalysed reaction is D-ribose 5-phosphate + ATP = 5-phospho-alpha-D-ribose 1-diphosphate + AMP + H(+). It participates in metabolic intermediate biosynthesis; 5-phospho-alpha-D-ribose 1-diphosphate biosynthesis; 5-phospho-alpha-D-ribose 1-diphosphate from D-ribose 5-phosphate (route I): step 1/1. Functionally, involved in the biosynthesis of the central metabolite phospho-alpha-D-ribosyl-1-pyrophosphate (PRPP) via the transfer of pyrophosphoryl group from ATP to 1-hydroxyl of ribose-5-phosphate (Rib-5-P). This Pseudomonas syringae pv. tomato (strain ATCC BAA-871 / DC3000) protein is Ribose-phosphate pyrophosphokinase.